A 451-amino-acid polypeptide reads, in one-letter code: Chromosomal replication initiator protein DnaA (451 aa).

The segment at 1–93 (MENIDDLWNK…HNQEEEALPE (93 aa)) is domain I, interacts with DnaA modulators. The disordered stretch occupies residues 88-108 (EEALPEQTPQTPPEKDVAGQS). The domain II stretch occupies residues 94–113 (QTPQTPPEKDVAGQSTLSQT). Residues 114–330 (MLNDKYTFNT…GALIRVVAYS (217 aa)) are domain III, AAA+ region. ATP-binding residues include glycine 158, glycine 160, lysine 161, and threonine 162. A domain IV, binds dsDNA region spans residues 331–451 (SLINQDMNAD…VQAITEQLRQ (121 aa)).

It belongs to the DnaA family. Oligomerizes as a right-handed, spiral filament on DNA at oriC.

The protein resides in the cytoplasm. Its function is as follows. Plays an essential role in the initiation and regulation of chromosomal replication. ATP-DnaA binds to the origin of replication (oriC) to initiate formation of the DNA replication initiation complex once per cell cycle. Binds the DnaA box (a 9 base pair repeat at the origin) and separates the double-stranded (ds)DNA. Forms a right-handed helical filament on oriC DNA; dsDNA binds to the exterior of the filament while single-stranded (ss)DNA is stabiized in the filament's interior. The ATP-DnaA-oriC complex binds and stabilizes one strand of the AT-rich DNA unwinding element (DUE), permitting loading of DNA polymerase. After initiation quickly degrades to an ADP-DnaA complex that is not apt for DNA replication. Binds acidic phospholipids. This chain is Chromosomal replication initiator protein DnaA, found in Shouchella clausii (strain KSM-K16) (Alkalihalobacillus clausii).